Consider the following 492-residue polypeptide: MEEWVEKYRPKSLNDVAGHSKTKEALCYWIESFIRGNKQKPVLLFGPPGSGKTTMAHAIANDYNFDVIELNASDKRNKDVISQVVGTAATSKSLTGKRTLIVLDEVDGLSGNDDRGGVSEIIKVLKNAENPVILTANDVYKPALSSLRNSVTMVDAGSVHTNSIPPVLRKIALKEGFEIDEKVIKLISSHAGGDLRAAINDLQALLTGGSIEIEDAKNLPDRDSEKSIFDAIRIIMKTTHYDIATSATVDLKEELGTVSEWISENLPKEYLKYGDLAKGYDYLSKSDVFLGRVYRRQYFGLWRYASALMTAGTALSKEDKYRGFTRYSPPTVFTKLSRTKVAREKLKEILKKIGIKTHTSIKGARSTLDFLYVIFESNLQMATDLTLYYEFTKEEVEFLTNKKISKDIFSIIECEKTKKTDDKNLMKKDLEEDTFKEKTNEIMPVIPKRPKISDNQISEILTKDNNPKDDVKKASKKPESTSKKQATLDKFF.

46-53 (GPPGSGKT) contacts ATP. A disordered region spans residues 445–492 (VIPKRPKISDNQISEILTKDNNPKDDVKKASKKPESTSKKQATLDKFF). The span at 461–482 (LTKDNNPKDDVKKASKKPESTS) shows a compositional bias: basic and acidic residues.

This sequence belongs to the activator 1 small subunits family. RfcL subfamily. In terms of assembly, heteromultimer composed of small subunits (RfcS) and large subunits (RfcL).

In terms of biological role, part of the RFC clamp loader complex which loads the PCNA sliding clamp onto DNA. The protein is Replication factor C large subunit of Methanococcus vannielii (strain ATCC 35089 / DSM 1224 / JCM 13029 / OCM 148 / SB).